The sequence spans 395 residues: Subtilisin-like protease 9 (395 aa).

An N-terminal signal peptide occupies residues 1 to 20 (MGFFRTLFSFSIFALSLADT). Positions 21–120 (SKFIGLDDVD…ADRVVKMAAL (100 aa)) are excised as a propeptide. The 82-residue stretch at 36–117 (SYIVVMKGAV…YVEADRVVKM (82 aa)) folds into the Inhibitor I9 domain. In terms of domain architecture, Peptidase S8 spans 128–395 (SWGLGRISHK…RRLLYNGSGA (268 aa)). Residues D160 and H191 each act as charge relay system in the active site. N252 carries an N-linked (GlcNAc...) asparagine glycan. S341 serves as the catalytic Charge relay system. A glycan (N-linked (GlcNAc...) asparagine) is linked at N391.

It belongs to the peptidase S8 family.

Its subcellular location is the secreted. In terms of biological role, secreted subtilisin-like serine protease with keratinolytic activity that contributes to pathogenicity. The chain is Subtilisin-like protease 9 (SUB9) from Arthroderma otae (strain ATCC MYA-4605 / CBS 113480) (Microsporum canis).